The sequence spans 963 residues: Adhesion G protein-coupled receptor D2 (963 aa).

Residues 1-662 are Extracellular-facing; sequence MDAPWGAGER…EEESLLRTLS (662 aa). The interval 18–38 is disordered; sequence DRSGVSLGPPPTPQVNQGTLG. Positions 116–325 constitute a Pentraxin (PTX) domain; that stretch reads TTAVLVFDER…LPTVWVRLLC (210 aa). Residues Cys-146 and Cys-212 are joined by a disulfide bond. The N-linked (GlcNAc...) asparagine glycan is linked to Asn-271. The GAIN-B domain occupies 489–649; it reads MALVASVQRL…AILLQIYEVQ (161 aa). Residues 599 to 649 form a GPS region; sequence PLFPPHPPSPYTGGAWATTGCSVAALYLDSTACFCNHSTSFAILLQIYEVQ. A disulfide bond links Cys-619 and Cys-633. The N-linked (GlcNAc...) asparagine glycan is linked to Asn-634. The helical transmembrane segment at 663–683 threads the bilayer; the sequence is FVGCGVSFCALTTTFLLFLVA. At 684-691 the chain is on the cytoplasmic side; the sequence is GVPKSERT. The helical transmembrane segment at 692 to 712 threads the bilayer; the sequence is TVHKNLTFSLASAEGFLMTSE. The Extracellular portion of the chain corresponds to 713–720; sequence WAKANEVA. The helical transmembrane segment at 721-741 threads the bilayer; that stretch reads CVAVTVAMHFLFLVAFSWMLV. Residues 742–762 are Cytoplasmic-facing; that stretch reads EGLLLWRKVVAVSMHPGPGMR. Residues 763-783 traverse the membrane as a helical segment; the sequence is LYHATGWGVPVGIVAVTLAML. The Extracellular segment spans residues 784 to 800; that stretch reads PHDYVAPGHCWLNVHTN. A helical transmembrane segment spans residues 801-821; that stretch reads AIWAFVGPVLFVLTANTCILA. Residues 822–857 are Cytoplasmic-facing; that stretch reads RVVMITVSSARRRARMLSPQPCLQQQIWTQIWATVK. The helical transmembrane segment at 858–878 threads the bilayer; that stretch reads PVLVLLPVLGLTWLAGILVHL. Over 879-880 the chain is Extracellular; that stretch reads SP. A helical membrane pass occupies residues 881–901; sequence AWAYAAVGLNSIQGLYIFLVY. Residues 902-963 are Cytoplasmic-facing; that stretch reads AACNEEVRSA…TPRHPLKAPA (62 aa).

It belongs to the G-protein coupled receptor 2 family. Adhesion G-protein coupled receptor (ADGR) subfamily.

It is found in the membrane. Orphan receptor. The chain is Adhesion G protein-coupled receptor D2 (ADGRD2) from Homo sapiens (Human).